Consider the following 270-residue polypeptide: uncharacterized protein (270 aa).

Disordered regions lie at residues 35–67 and 168–204; these read IKQDNNNNNNNNTNVSLSPSIKSQATSSTGGNK and SNNNNNNNNNNNNNNNNNNNNNNNNDDDQQKDIDNSN. Positions 39-48 are enriched in low complexity; the sequence is NNNNNNNNTN. Polar residues predominate over residues 49 to 67; it reads VSLSPSIKSQATSSTGGNK. The span at 168–191 shows a compositional bias: low complexity; that stretch reads SNNNNNNNNNNNNNNNNNNNNNNN.

This is an uncharacterized protein from Dictyostelium discoideum (Social amoeba).